Consider the following 265-residue polypeptide: Imidazole glycerol phosphate synthase subunit HisF (265 aa).

Active-site residues include D12 and D131.

This sequence belongs to the HisA/HisF family. Heterodimer of HisH and HisF.

It localises to the cytoplasm. It carries out the reaction 5-[(5-phospho-1-deoxy-D-ribulos-1-ylimino)methylamino]-1-(5-phospho-beta-D-ribosyl)imidazole-4-carboxamide + L-glutamine = D-erythro-1-(imidazol-4-yl)glycerol 3-phosphate + 5-amino-1-(5-phospho-beta-D-ribosyl)imidazole-4-carboxamide + L-glutamate + H(+). It functions in the pathway amino-acid biosynthesis; L-histidine biosynthesis; L-histidine from 5-phospho-alpha-D-ribose 1-diphosphate: step 5/9. IGPS catalyzes the conversion of PRFAR and glutamine to IGP, AICAR and glutamate. The HisF subunit catalyzes the cyclization activity that produces IGP and AICAR from PRFAR using the ammonia provided by the HisH subunit. This Alkalilimnicola ehrlichii (strain ATCC BAA-1101 / DSM 17681 / MLHE-1) protein is Imidazole glycerol phosphate synthase subunit HisF.